The chain runs to 531 residues: 2,3-bisphosphoglycerate-independent phosphoglycerate mutase (531 aa).

Mn(2+) is bound by residues Asp-15 and Ser-65. Ser-65 serves as the catalytic Phosphoserine intermediate. Residues His-126, 155 to 156 (RD), Arg-187, Arg-193, 257 to 260 (RPDR), and Lys-330 contribute to the substrate site. Asp-397, His-401, Asp-438, His-439, and His-456 together coordinate Mn(2+).

Belongs to the BPG-independent phosphoglycerate mutase family. Monomer. Requires Mn(2+) as cofactor.

It catalyses the reaction (2R)-2-phosphoglycerate = (2R)-3-phosphoglycerate. The protein operates within carbohydrate degradation; glycolysis; pyruvate from D-glyceraldehyde 3-phosphate: step 3/5. In terms of biological role, catalyzes the interconversion of 2-phosphoglycerate and 3-phosphoglycerate. This Thermosynechococcus vestitus (strain NIES-2133 / IAM M-273 / BP-1) protein is 2,3-bisphosphoglycerate-independent phosphoglycerate mutase.